The chain runs to 292 residues: Nitrogenase iron protein (292 aa).

10 to 17 (GKGGIGKS) is a binding site for ATP. Cys-98 serves as a coordination point for [4Fe-4S] cluster. Residue Arg-101 is modified to ADP-ribosylarginine; by dinitrogenase reductase ADP-ribosyltransferase. Cys-133 lines the [4Fe-4S] cluster pocket.

The protein belongs to the NifH/BchL/ChlL family. Homodimer. [4Fe-4S] cluster serves as cofactor. Post-translationally, the reversible ADP-ribosylation of Arg-101 inactivates the nitrogenase reductase and regulates nitrogenase activity.

It carries out the reaction N2 + 8 reduced [2Fe-2S]-[ferredoxin] + 16 ATP + 16 H2O = H2 + 8 oxidized [2Fe-2S]-[ferredoxin] + 2 NH4(+) + 16 ADP + 16 phosphate + 6 H(+). The key enzymatic reactions in nitrogen fixation are catalyzed by the nitrogenase complex, which has 2 components: the iron protein and the molybdenum-iron protein. The polypeptide is Nitrogenase iron protein (Teredinibacter turnerae (strain ATCC 39867 / T7901)).